We begin with the raw amino-acid sequence, 318 residues long: Protein teg (318 aa).

Positions 7–182 constitute a PNPLA domain; that stretch reads ITFDGGGTLG…VATNTSTASI (176 aa). The GXGXXG signature appears at 11 to 16; the sequence is GGGTLG. The GXSXG motif lies at 42–46; the sequence is GNSIG. S44 (nucleophile) is an active-site residue. Residue D169 is the Proton acceptor of the active site.

Functionally, probable lipid hydrolase. The polypeptide is Protein teg (teg) (Priestia megaterium (strain ATCC 14581 / DSM 32 / CCUG 1817 / JCM 2506 / NBRC 15308 / NCIMB 9376 / NCTC 10342 / NRRL B-14308 / VKM B-512 / Ford 19) (Bacillus megaterium)).